The sequence spans 312 residues: Fe-S cluster assembly protein DRE2 (312 aa).

The tract at residues 7–139 (LSDVPRVLLL…VKPVFEEQSV (133 aa)) is N-terminal SAM-like domain. Positions 140 to 204 (LLPFSINRSQ…EDELINEDEL (65 aa)) are linker. The [2Fe-2S] cluster site is built by Cys-214, Cys-225, Cys-228, and Cys-230. Residues 214 to 230 (CRPKAGKRRRACKDCTC) are fe-S binding site A. Positions 275, 278, 286, and 289 each coordinate [4Fe-4S] cluster. Short sequence motifs (cx2C motif) lie at residues 275–278 (CGNC) and 286–289 (CDGC). A fe-S binding site B region spans residues 275 to 289 (CGNCSLGDAFRCDGC).

The protein belongs to the anamorsin family. Monomer. Interacts with TAH18. Interacts with MIA40. [2Fe-2S] cluster is required as a cofactor. [4Fe-4S] cluster serves as cofactor.

The protein resides in the cytoplasm. Its subcellular location is the mitochondrion intermembrane space. In terms of biological role, component of the cytosolic iron-sulfur (Fe-S) protein assembly (CIA) machinery required for the maturation of extramitochondrial Fe-S proteins. Part of an electron transfer chain functioning in an early step of cytosolic Fe-S biogenesis, facilitating the de novo assembly of a [4Fe-4S] cluster on the scaffold complex CFD1-NBP35. Electrons are transferred to DRE2 from NADPH via the FAD- and FMN-containing protein TAH18. TAH18-DRE2 are also required for the assembly of the diferric tyrosyl radical cofactor of ribonucleotide reductase (RNR), probably by providing electrons for reduction during radical cofactor maturation in the catalytic small subunit RNR2. This chain is Fe-S cluster assembly protein DRE2, found in Arthroderma otae (strain ATCC MYA-4605 / CBS 113480) (Microsporum canis).